An 887-amino-acid chain; its full sequence is Pyruvate dehydrogenase E1 component (887 aa).

As to quaternary structure, homodimer. Part of the PDH complex, consisting of multiple copies of pyruvate dehydrogenase (E1), dihydrolipoamide acetyltransferase (E2) and lipoamide dehydrogenase (E3). The cofactor is thiamine diphosphate.

It catalyses the reaction N(6)-[(R)-lipoyl]-L-lysyl-[protein] + pyruvate + H(+) = N(6)-[(R)-S(8)-acetyldihydrolipoyl]-L-lysyl-[protein] + CO2. Functionally, component of the pyruvate dehydrogenase (PDH) complex, that catalyzes the overall conversion of pyruvate to acetyl-CoA and CO(2). The protein is Pyruvate dehydrogenase E1 component (aceE) of Buchnera aphidicola subsp. Baizongia pistaciae (strain Bp).